A 549-amino-acid chain; its full sequence is Solute carrier family 22 member 6 (549 aa).

The Cytoplasmic portion of the chain corresponds to 1 to 23 (MAFNDLLLQLGGVGRFQKIQVTL). A helical membrane pass occupies residues 24 to 44 (VILPLILLASHNTLQNFTAAI). The Extracellular portion of the chain corresponds to 45-135 (PTHHCRPPAD…LVCSHRALRQ (91 aa)). Asparagine 56, asparagine 92, and asparagine 113 each carry an N-linked (GlcNAc...) asparagine glycan. The helical transmembrane segment at 136-156 (LAQSLYMMGVLLGAMTFGCLA) threads the bilayer. The Cytoplasmic portion of the chain corresponds to 157–164 (DRLGRRKV). The chain crosses the membrane as a helical span at residues 165-185 (LIFNYLQTAVSGTCAAFAPNF). Over 186–195 (PAYCAFRFLS) the chain is Extracellular. Residues 196–216 (GMSTAGVVLNCMTLNVEWMPI) traverse the membrane as a helical segment. The Cytoplasmic portion of the chain corresponds to 217 to 224 (HTRAYVGT). Residues 225 to 245 (LTGYVYSLGQFLLAGMAYAVP) form a helical membrane-spanning segment. Over 246 to 248 (HWR) the chain is Extracellular. A helical membrane pass occupies residues 249 to 269 (YLQLLVSAPFFAFFIYSWFFI). Topologically, residues 270-337 (ESARWYASSG…ELIRCPALRR (68 aa)) are cytoplasmic. Residues 338–358 (LFLCLSMLWFATSFAYYGLVM) traverse the membrane as a helical segment. At 359–368 (DLQGFGVSIY) the chain is on the extracellular side. The chain crosses the membrane as a helical span at residues 369-389 (LIQVIFGAVDLPAKLVSFLVI). Residues 390 to 395 (NNVGRR) lie on the Cytoplasmic side of the membrane. A helical membrane pass occupies residues 396 to 416 (PAQMASLLLAGICILINGVVP). The Extracellular portion of the chain corresponds to 417–425 (KDKSIVRTS). Residues 426–446 (LAVLGKGCLASSFNCIFLYTG) traverse the membrane as a helical segment. Residues 447–456 (EVYPTMIRQT) are Cytoplasmic-facing. A helical transmembrane segment spans residues 457–477 (GLGMGSTLARVGSIVSPLVSM). Topologically, residues 478–484 (TAELYPS) are extracellular. A helical transmembrane segment spans residues 485-505 (VPLFIYGAVPVAASAAIALLP). Residues 506 to 549 (ETLGQPLPDTVQDVENRRRGKTRKQQEELQKQMVPLQASAQVKN) are Cytoplasmic-facing. A disordered region spans residues 521 to 549 (NRRRGKTRKQQEELQKQMVPLQASAQVKN).

The protein belongs to the major facilitator (TC 2.A.1) superfamily. Organic cation transporter (TC 2.A.1.19) family. Glycosylated. Glycosylation is necessary for proper targeting of the transporter to the plasma membrane.

It localises to the basolateral cell membrane. It is found in the basal cell membrane. It catalyses the reaction (6R)-L-erythro-5,6,7,8-tetrahydrobiopterin(out) + a dicarboxylate(in) = (6R)-L-erythro-5,6,7,8-tetrahydrobiopterin(in) + a dicarboxylate(out). The catalysed reaction is L-erythro-7,8-dihydrobiopterin(out) + a dicarboxylate(in) = L-erythro-7,8-dihydrobiopterin(in) + a dicarboxylate(out). The enzyme catalyses L-sepiapterin(out) + a dicarboxylate(in) = L-sepiapterin(in) + a dicarboxylate(out). It carries out the reaction prostaglandin F2alpha(out) + a dicarboxylate(in) = prostaglandin F2alpha(in) + a dicarboxylate(out). It catalyses the reaction prostaglandin E2(out) + a dicarboxylate(in) = prostaglandin E2(in) + a dicarboxylate(out). The catalysed reaction is 3',5'-cyclic AMP(out) + a dicarboxylate(in) = 3',5'-cyclic AMP(in) + a dicarboxylate(out). The enzyme catalyses 3',5'-cyclic GMP(out) + a dicarboxylate(in) = 3',5'-cyclic GMP(in) + a dicarboxylate(out). It carries out the reaction urate(out) + a dicarboxylate(in) = urate(in) + a dicarboxylate(out). It catalyses the reaction kynurenate(out) + glutarate(in) = kynurenate(in) + glutarate(out). The catalysed reaction is (indol-3-yl)acetate(out) + a dicarboxylate(in) = (indol-3-yl)acetate(in) + a dicarboxylate(out). The enzyme catalyses indoxyl sulfate(out) + a dicarboxylate(in) = indoxyl sulfate(in) + a dicarboxylate(out). It carries out the reaction N-benzoylglycine(out) + a dicarboxylate(in) = N-benzoylglycine(in) + a dicarboxylate(out). It catalyses the reaction 3-carboxy-4-methyl-5-propyl-2-furanpropanoate(out) + a dicarboxylate(in) = 3-carboxy-4-methyl-5-propyl-2-furanpropanoate(in) + a dicarboxylate(out). In terms of biological role, secondary active transporter that functions as a Na(+)-independent organic anion (OA)/dicarboxylate antiporter where the uptake of one molecule of OA into the cell is coupled with an efflux of one molecule of intracellular dicarboxylate such as 2-oxoglutarate or glutarate. Mediates the uptake of OA across the basolateral side of proximal tubule epithelial cells, thereby contributing to the renal elimination of endogenous OA from the systemic circulation into the urine. Functions as a biopterin transporters involved in the uptake and the secretion of coenzymes tetrahydrobiopterin (BH4), dihydrobiopterin (BH2) and sepiapterin to urine, thereby determining baseline levels of blood biopterins. Transports prostaglandin E2 (PGE2) and prostaglandin F2-alpha (PGF2-alpha) and may contribute to their renal excretion. Also mediates the uptake of cyclic nucleotides such as cAMP and cGMP. Involved in the transport of neuroactive tryptophan metabolites kynurenate (KYNA) and xanthurenate (XA) and may contribute to their secretion from the brain. May transport glutamate. Also involved in the disposition of uremic toxins and potentially toxic xenobiotics by the renal organic anion secretory pathway, helping reduce their undesired toxicological effects on the body. Uremic toxins include the indoxyl sulfate (IS), hippurate/N-benzoylglycine (HA), indole acetate (IA), 3-carboxy-4- methyl-5-propyl-2-furanpropionate (CMPF) and urate. Xenobiotics include the mycotoxin ochratoxin (OTA). May also contribute to the transport of organic compounds in testes across the blood-testis-barrier. This is Solute carrier family 22 member 6 from Bos taurus (Bovine).